Consider the following 257-residue polypeptide: 3-methyl-2-oxobutanoate hydroxymethyltransferase (257 aa).

Mg(2+) contacts are provided by Asp42 and Asp86. Residues 42-43, Asp86, and Lys116 contribute to the 3-methyl-2-oxobutanoate site; that span reads DS. Residue Glu118 coordinates Mg(2+). The active-site Proton acceptor is Glu185.

Belongs to the PanB family. As to quaternary structure, homodecamer; pentamer of dimers. Mg(2+) is required as a cofactor.

The protein localises to the cytoplasm. The enzyme catalyses 3-methyl-2-oxobutanoate + (6R)-5,10-methylene-5,6,7,8-tetrahydrofolate + H2O = 2-dehydropantoate + (6S)-5,6,7,8-tetrahydrofolate. The protein operates within cofactor biosynthesis; (R)-pantothenate biosynthesis; (R)-pantoate from 3-methyl-2-oxobutanoate: step 1/2. Catalyzes the reversible reaction in which hydroxymethyl group from 5,10-methylenetetrahydrofolate is transferred onto alpha-ketoisovalerate to form ketopantoate. The sequence is that of 3-methyl-2-oxobutanoate hydroxymethyltransferase from Prochlorococcus marinus (strain MIT 9301).